Consider the following 335-residue polypeptide: Cytoskeleton protein RodZ (335 aa).

Residues 1-111 (MNTEATHDQN…LGKRRKKRDG (111 aa)) are Cytoplasmic-facing. In terms of domain architecture, HTH cro/C1-type spans 19–71 (LRNAREQLGLSQQAVAERLCLKVSTVRDIEEDKAPADLASTFLRGYIRSYARL). Positions 30-49 (QQAVAERLCLKVSTVRDIEE) form a DNA-binding region, H-T-H motif. A helical; Signal-anchor for type II membrane protein transmembrane segment spans residues 112-132 (WLMTFTWLVLFVVIGLSGAWW). Residues 133–335 (WQDHKAQQEE…TLNAEQSPAQ (203 aa)) are Periplasmic-facing. Residues 148–164 (DQSSAELNNNQSQSVPL) show a composition bias toward polar residues. The tract at residues 148 to 244 (DQSSAELNNN…PLPTDQAGVT (97 aa)) is disordered. 2 stretches are compositionally biased toward low complexity: residues 165–205 (DTST…DPQQ) and 217–239 (DTAA…LPTD).

The protein belongs to the RodZ family.

It localises to the cell inner membrane. In terms of biological role, cytoskeletal protein that is involved in cell-shape control through regulation of the length of the long axis. In Escherichia coli O127:H6 (strain E2348/69 / EPEC), this protein is Cytoskeleton protein RodZ.